The chain runs to 161 residues: MQTIEQQIANVIEESLTDMGFELVLVKFKGVNPKVVEILIDSLNSEKISVEDCTKASRTISAILDVEDLIEAAYSLEVASSGLERPLVKFENYNRFLEREVKIKLKELLNGKTRYQGKIIKAENNKIYLKCEEQEVLIDYDLIKNANLVLTEEVFKKLLKQ.

It belongs to the RimP family.

It is found in the cytoplasm. In terms of biological role, required for maturation of 30S ribosomal subunits. The polypeptide is Ribosome maturation factor RimP (Rickettsia conorii (strain ATCC VR-613 / Malish 7)).